Consider the following 292-residue polypeptide: tRNA pseudouridine synthase B (292 aa).

The Nucleophile role is filled by aspartate 38.

The protein belongs to the pseudouridine synthase TruB family. Type 1 subfamily.

The catalysed reaction is uridine(55) in tRNA = pseudouridine(55) in tRNA. In terms of biological role, responsible for synthesis of pseudouridine from uracil-55 in the psi GC loop of transfer RNAs. The polypeptide is tRNA pseudouridine synthase B (Gloeobacter violaceus (strain ATCC 29082 / PCC 7421)).